A 248-amino-acid polypeptide reads, in one-letter code: UPF0246 protein RPR_00055 (248 aa).

Belongs to the UPF0246 family.

This chain is UPF0246 protein RPR_00055, found in Rickettsia peacockii (strain Rustic).